The sequence spans 164 residues: FMN reductase (NADH) RutF (164 aa).

It belongs to the non-flavoprotein flavin reductase family. RutF subfamily.

It catalyses the reaction FMNH2 + NAD(+) = FMN + NADH + 2 H(+). Catalyzes the reduction of FMN to FMNH2 which is used to reduce pyrimidine by RutA via the Rut pathway. This Escherichia coli O81 (strain ED1a) protein is FMN reductase (NADH) RutF.